Here is a 551-residue protein sequence, read N- to C-terminus: Chaperonin GroEL 4 (551 aa).

Residues 30–33 (TLGP), Lys51, 87–91 (DGTTT), Gly415, and Asp495 each bind ATP.

Belongs to the chaperonin (HSP60) family. Forms a cylinder of 14 subunits composed of two heptameric rings stacked back-to-back. Interacts with the co-chaperonin GroES.

The protein resides in the cytoplasm. It catalyses the reaction ATP + H2O + a folded polypeptide = ADP + phosphate + an unfolded polypeptide.. Together with its co-chaperonin GroES, plays an essential role in assisting protein folding. The GroEL-GroES system forms a nano-cage that allows encapsulation of the non-native substrate proteins and provides a physical environment optimized to promote and accelerate protein folding. In Mesorhizobium japonicum (strain LMG 29417 / CECT 9101 / MAFF 303099) (Mesorhizobium loti (strain MAFF 303099)), this protein is Chaperonin GroEL 4.